A 158-amino-acid polypeptide reads, in one-letter code: NADPH-dependent 7-cyano-7-deazaguanine reductase (158 aa).

The Thioimide intermediate role is filled by Cys-56. The active-site Proton donor is the Asp-63. Substrate-binding positions include 78–80 (VES) and 97–98 (HE).

Belongs to the GTP cyclohydrolase I family. QueF type 1 subfamily.

Its subcellular location is the cytoplasm. It carries out the reaction 7-aminomethyl-7-carbaguanine + 2 NADP(+) = 7-cyano-7-deazaguanine + 2 NADPH + 3 H(+). The protein operates within tRNA modification; tRNA-queuosine biosynthesis. Catalyzes the NADPH-dependent reduction of 7-cyano-7-deazaguanine (preQ0) to 7-aminomethyl-7-deazaguanine (preQ1). The protein is NADPH-dependent 7-cyano-7-deazaguanine reductase of Rhodopseudomonas palustris (strain HaA2).